Here is a 147-residue protein sequence, read N- to C-terminus: uncharacterized protein (147 aa).

The disordered stretch occupies residues 51–72 (VTSSMSVMNDSEECPLINGPSM).

This is an uncharacterized protein from Gallid herpesvirus 2 (strain GA) (GaHV-2).